Reading from the N-terminus, the 189-residue chain is MyoD family inhibitor domain-containing protein 2 (189 aa).

The MDFI domain maps to 28-188 (KEDTQLTNAK…LAMEISEICY (161 aa)).

This sequence belongs to the MDFI family.

The sequence is that of MyoD family inhibitor domain-containing protein 2 from Homo sapiens (Human).